The following is a 581-amino-acid chain: Metal transporter Nramp7.1 (581 aa).

Residues Asn11 and Asn19 are each glycosylated (N-linked (GlcNAc...) asparagine). The next 7 helical transmembrane spans lie at 57 to 77 (FLSY…PGNL), 90 to 110 (ELLW…SLAA), 146 to 166 (YCLW…EGII), 181 to 201 (LLIG…WVGV), 224 to 244 (LLIA…MSYV), 270 to 290 (IALL…ALVL), and 307 to 327 (YFLI…LAVI). Asn338 is a glycosylation site (N-linked (GlcNAc...) asparagine). 5 consecutive transmembrane segments (helical) span residues 370–390 (IYAI…TYAG), 409–429 (LVTR…GGSS), 434–454 (LIII…FALI), 473–493 (IYII…NIYY), and 513–533 (VFIG…VIYL). The disordered stretch occupies residues 551 to 581 (PQQQANMENGLGPEMERVPYREDLADIPLPE). The segment covering 564–574 (EMERVPYREDL) has biased composition (basic and acidic residues).

It belongs to the NRAMP (TC 2.A.55) family.

The protein resides in the membrane. Functionally, probable divalent metal transporter. In Populus trichocarpa (Western balsam poplar), this protein is Metal transporter Nramp7.1.